A 194-amino-acid polypeptide reads, in one-letter code: Thiol:disulfide interchange protein CycY (194 aa).

The first 37 residues, 1 to 37 (MSEQSTSANPQRRTFLMVLPLIAFIGLALLFWFRLGS), serve as a signal peptide directing secretion. One can recognise a Thioredoxin domain in the interval 46–190 (ALIGRPAPQT…LRSVLLPQME (145 aa)). C92 and C95 are disulfide-bonded.

It belongs to the thioredoxin family. DsbE subfamily.

It is found in the periplasm. In terms of biological role, required for disulfide bond formation in some periplasmic proteins. Also acts as a disulfide oxidoreductase in cytochromes c biogenesis. The cysteines of apocytochromes c must be in the reduced state for covalent linkage between the two moieties to occur. The polypeptide is Thiol:disulfide interchange protein CycY (cycY) (Bradyrhizobium diazoefficiens (strain JCM 10833 / BCRC 13528 / IAM 13628 / NBRC 14792 / USDA 110)).